Here is a 185-residue protein sequence, read N- to C-terminus: Photosystem I assembly protein Ycf4 (185 aa).

Transmembrane regions (helical) follow at residues 24–44 (YIIG…SISS) and 58–78 (ALLF…ANLL).

It belongs to the Ycf4 family.

The protein resides in the cellular thylakoid membrane. Functionally, seems to be required for the assembly of the photosystem I complex. The polypeptide is Photosystem I assembly protein Ycf4 (Prochlorococcus marinus (strain MIT 9215)).